A 257-amino-acid polypeptide reads, in one-letter code: Thiazole synthase (257 aa).

K98 acts as the Schiff-base intermediate with DXP in catalysis. Residues G159, 185-186 (AG), and 207-208 (NT) contribute to the 1-deoxy-D-xylulose 5-phosphate site.

Belongs to the ThiG family. In terms of assembly, homotetramer. Forms heterodimers with either ThiH or ThiS.

Its subcellular location is the cytoplasm. The catalysed reaction is [ThiS sulfur-carrier protein]-C-terminal-Gly-aminoethanethioate + 2-iminoacetate + 1-deoxy-D-xylulose 5-phosphate = [ThiS sulfur-carrier protein]-C-terminal Gly-Gly + 2-[(2R,5Z)-2-carboxy-4-methylthiazol-5(2H)-ylidene]ethyl phosphate + 2 H2O + H(+). It participates in cofactor biosynthesis; thiamine diphosphate biosynthesis. In terms of biological role, catalyzes the rearrangement of 1-deoxy-D-xylulose 5-phosphate (DXP) to produce the thiazole phosphate moiety of thiamine. Sulfur is provided by the thiocarboxylate moiety of the carrier protein ThiS. In vitro, sulfur can be provided by H(2)S. The sequence is that of Thiazole synthase from Anaeromyxobacter dehalogenans (strain 2CP-C).